The primary structure comprises 470 residues: Cupincin (470 aa).

An N-terminal signal peptide occupies residues 1–34 (MAKKKTSSSMARSQLAALLISLCFLSLASNAVGW). Over residues 36–52 (RRGEREEEDERRRHGGE) the composition is skewed to basic and acidic residues. Disordered regions lie at residues 36 to 59 (RRGEREEEDERRRHGGEGGRPYHL) and 240 to 261 (KSCSRGGGGGSGSEWEIKPSSL). Cupin type-1 domains are found at residues 57–215 (YHLG…EELE) and 259–445 (SSLT…AREA). N297 carries N-linked (GlcNAc...) asparagine glycosylation. The tract at residues 330-368 (PHVSGGGSSERREREREHGRRREEEQGEEEHGERGEKAR) is disordered. The span at 338–367 (SERREREREHGRRREEEQGEEEHGERGEKA) shows a compositional bias: basic and acidic residues. Zn(2+) contacts are provided by H347, E352, and H360.

This sequence belongs to the 7S seed storage protein family. Homotrimer. The cofactor is Zn(2+).

It localises to the secreted. Functionally, seed storage protein. Globulin-like protein that acts as a zinc metalloprotease. Cleaves specifically between Leu-15 and Tyr-16 of insulin B chain, and Gln-1 and Leu-2 of neurotensin (NT) peptide in vitro. May play a role as an initiating endopeptidase in germinating seeds. The sequence is that of Cupincin from Oryza sativa subsp. japonica (Rice).